We begin with the raw amino-acid sequence, 304 residues long: Undecaprenyl-diphosphatase (304 aa).

A run of 8 helical transmembrane segments spans residues 5–25 (FLFI…EFVP), 47–67 (GFPE…VVVL), 72–92 (ISSS…LKTS), 111–131 (FGIN…LFHD), 137–157 (LFST…LIVI), 209–231 (ISGL…AMVG), 248–268 (TNWI…LVVI), and 283–303 (FAIY…TKVI).

It belongs to the UppP family.

The protein localises to the cell membrane. The catalysed reaction is di-trans,octa-cis-undecaprenyl diphosphate + H2O = di-trans,octa-cis-undecaprenyl phosphate + phosphate + H(+). In terms of biological role, catalyzes the dephosphorylation of undecaprenyl diphosphate (UPP). Confers resistance to bacitracin. The sequence is that of Undecaprenyl-diphosphatase from Clostridium perfringens (strain ATCC 13124 / DSM 756 / JCM 1290 / NCIMB 6125 / NCTC 8237 / Type A).